Reading from the N-terminus, the 89-residue chain is Small ribosomal subunit protein uS15 (89 aa).

It belongs to the universal ribosomal protein uS15 family. As to quaternary structure, part of the 30S ribosomal subunit. Forms a bridge to the 50S subunit in the 70S ribosome, contacting the 23S rRNA.

Its function is as follows. One of the primary rRNA binding proteins, it binds directly to 16S rRNA where it helps nucleate assembly of the platform of the 30S subunit by binding and bridging several RNA helices of the 16S rRNA. In terms of biological role, forms an intersubunit bridge (bridge B4) with the 23S rRNA of the 50S subunit in the ribosome. This is Small ribosomal subunit protein uS15 from Bifidobacterium adolescentis (strain ATCC 15703 / DSM 20083 / NCTC 11814 / E194a).